We begin with the raw amino-acid sequence, 174 residues long: UPF0316 protein lmo1776 (174 aa).

A run of 3 helical transmembrane segments spans residues 4–24 (GIFI…IYTV), 36–56 (LAAL…SLVL), and 62–82 (IANV…GMKI).

The protein belongs to the UPF0316 family.

Its subcellular location is the cell membrane. The protein is UPF0316 protein lmo1776 of Listeria monocytogenes serovar 1/2a (strain ATCC BAA-679 / EGD-e).